We begin with the raw amino-acid sequence, 137 residues long: Small ribosomal subunit protein bS6 (137 aa).

Belongs to the bacterial ribosomal protein bS6 family.

In terms of biological role, binds together with bS18 to 16S ribosomal RNA. The chain is Small ribosomal subunit protein bS6 from Mycoplasma mycoides subsp. mycoides SC (strain CCUG 32753 / NCTC 10114 / PG1).